The following is a 360-amino-acid chain: Peptide chain release factor 1 (360 aa).

An N5-methylglutamine modification is found at Q234.

Belongs to the prokaryotic/mitochondrial release factor family. Methylated by PrmC. Methylation increases the termination efficiency of RF1.

The protein localises to the cytoplasm. In terms of biological role, peptide chain release factor 1 directs the termination of translation in response to the peptide chain termination codons UAG and UAA. In Clostridium perfringens (strain 13 / Type A), this protein is Peptide chain release factor 1.